The sequence spans 957 residues: Glycine dehydrogenase (decarboxylating) (957 aa).

An N6-(pyridoxal phosphate)lysine modification is found at Lys708.

The protein belongs to the GcvP family. As to quaternary structure, the glycine cleavage system is composed of four proteins: P, T, L and H. The cofactor is pyridoxal 5'-phosphate.

The catalysed reaction is N(6)-[(R)-lipoyl]-L-lysyl-[glycine-cleavage complex H protein] + glycine + H(+) = N(6)-[(R)-S(8)-aminomethyldihydrolipoyl]-L-lysyl-[glycine-cleavage complex H protein] + CO2. Functionally, the glycine cleavage system catalyzes the degradation of glycine. The P protein binds the alpha-amino group of glycine through its pyridoxal phosphate cofactor; CO(2) is released and the remaining methylamine moiety is then transferred to the lipoamide cofactor of the H protein. This is Glycine dehydrogenase (decarboxylating) from Klebsiella pneumoniae (strain 342).